Reading from the N-terminus, the 486-residue chain is MDTKNTEIKGKERYKAGVLKYAQMGYWDGDYQPKDTDVLALFRITPQEGVDPIEAAAAVAGESSTATWTVVWTDRLTACDSYRAKAYKVEPVPGTPGQYFCYVAYDLILFEEGSIANLTASIIGNVFSFKPLKAARLEDMRFPVAYVKTYKGPPTGIIVERERLDKFGKPLLGATTKPKLGLSGKNYGRVVYEGLKGGLDFMKDDENINSQPFMHWRDRFLYVMEAVNLASAQTGEVKGHYLNITAGTMEEMYRRAEFAKSLGSVIVMVDLIIGYTAIQSISEWCRQNDMILHMHRAGHGTYTRQKNHGISFRVIAKWLRLAGVDHLHCGTAVGKLEGDPPTVQGYYNVCREPFNTVDLQRGLFFEQDWADLKKVMPVASGGIHAGQMHQLLSLFGDDVVLQFGGGTIGHPMGIQAGATANRVALEAMVLARNEGRNIDVEGPEILRAAAKWCKPLEAALDTWGNITFNYTSTDTSDFVPTPSVSM.

Substrate is bound by residues Asn125 and Thr175. Residue Lys177 is the Proton acceptor of the active site. Residue Lys179 participates in substrate binding. Residues Lys203, Asp205, and Glu206 each coordinate Mg(2+). Lys203 carries the post-translational modification N6-carboxylysine. His295 functions as the Proton acceptor in the catalytic mechanism. Residues Arg296, His328, and Ser380 each coordinate substrate.

The protein belongs to the RuBisCO large chain family. Type I subfamily. In terms of assembly, heterohexadecamer of 8 large chains and 8 small chains. The cofactor is Mg(2+).

It catalyses the reaction 2 (2R)-3-phosphoglycerate + 2 H(+) = D-ribulose 1,5-bisphosphate + CO2 + H2O. The catalysed reaction is D-ribulose 1,5-bisphosphate + O2 = 2-phosphoglycolate + (2R)-3-phosphoglycerate + 2 H(+). Functionally, ruBisCO catalyzes two reactions: the carboxylation of D-ribulose 1,5-bisphosphate, the primary event in carbon dioxide fixation, as well as the oxidative fragmentation of the pentose substrate. Both reactions occur simultaneously and in competition at the same active site. The polypeptide is Ribulose bisphosphate carboxylase large chain 1 (Cereibacter sphaeroides (strain ATCC 17025 / ATH 2.4.3) (Rhodobacter sphaeroides)).